We begin with the raw amino-acid sequence, 124 residues long: Small ribosomal subunit protein uS12 (124 aa).

Aspartate 89 bears the 3-methylthioaspartic acid mark.

The protein belongs to the universal ribosomal protein uS12 family. In terms of assembly, part of the 30S ribosomal subunit. Contacts proteins S8 and S17. May interact with IF1 in the 30S initiation complex.

With S4 and S5 plays an important role in translational accuracy. Functionally, interacts with and stabilizes bases of the 16S rRNA that are involved in tRNA selection in the A site and with the mRNA backbone. Located at the interface of the 30S and 50S subunits, it traverses the body of the 30S subunit contacting proteins on the other side and probably holding the rRNA structure together. The combined cluster of proteins S8, S12 and S17 appears to hold together the shoulder and platform of the 30S subunit. This is Small ribosomal subunit protein uS12 from Psychrobacter arcticus (strain DSM 17307 / VKM B-2377 / 273-4).